A 436-amino-acid chain; its full sequence is Cyclic nucleotide-binding domain-containing protein 1 (436 aa).

The span at 89 to 105 shows a compositional bias: basic and acidic residues; it reads EQRELNEGKEESQHQQP. The segment at 89-108 is disordered; it reads EQRELNEGKEESQHQQPDDS. Residue 322–436 participates in a nucleoside 3',5'-cyclic phosphate binding; sequence YYEEWPTLSI…IIEDKDLFVA (115 aa).

The sequence is that of Cyclic nucleotide-binding domain-containing protein 1 (CNBD1) from Homo sapiens (Human).